The following is a 415-amino-acid chain: Histone acetyltransferase type B subunit 2 (415 aa).

WD repeat units lie at residues 118-158 (ENNF…KTAI), 163-203 (PHED…ATDL), 211-251 (THKD…EPVS), 256-296 (PESE…TKSA), and 307-347 (GHSD…EEQA). The segment at 349-353 (EDAED) is interaction with the histone H4 N-terminus. The WD 6 repeat unit spans residues 364–404 (GHTGAVTDLSWCPYKDWTIGSVADDNIVHLWEIGKTLLNAE).

Belongs to the WD repeat RBAP46/RBAP48/MSI1 family. Component of the HAT-B complex composed of at least HAT1 and HAT2. The HAT-B complex binds to histone H4 tail.

The protein resides in the cytoplasm. It is found in the nucleus. Functionally, regulatory subunit of the histone acetylase B (HAT-B) complex. The complex acetylates 'Lys-12' of histone H4 which is required for telomeric silencing. The sequence is that of Histone acetyltransferase type B subunit 2 (HAT2) from Debaryomyces hansenii (strain ATCC 36239 / CBS 767 / BCRC 21394 / JCM 1990 / NBRC 0083 / IGC 2968) (Yeast).